We begin with the raw amino-acid sequence, 103 residues long: Small ribosomal subunit protein bS18 (103 aa).

Residues M1 to Q19 are compositionally biased toward basic and acidic residues. The disordered stretch occupies residues M1 to R33. Residues G24–R33 are compositionally biased toward basic residues.

It belongs to the bacterial ribosomal protein bS18 family. As to quaternary structure, part of the 30S ribosomal subunit. Forms a tight heterodimer with protein bS6.

In terms of biological role, binds as a heterodimer with protein bS6 to the central domain of the 16S rRNA, where it helps stabilize the platform of the 30S subunit. This is Small ribosomal subunit protein bS18 from Geobacter sulfurreducens (strain ATCC 51573 / DSM 12127 / PCA).